The chain runs to 1399 residues: Meiosis-specific protein ASY2 (1399 aa).

Residues 10-248 (QQSLILTTEL…SQHHVLTVKV (239 aa)) form the HORMA domain. A compositionally biased stretch (acidic residues) spans 257–266 (PCEDENDNMQ). Disordered regions lie at residues 257–281 (PCED…HDDQ), 487–525 (SKPK…SSEP), 617–656 (RLTG…AAPE), 940–974 (PPPP…VDQV), and 1045–1090 (DQDK…AAPK). The span at 267–281 (DDERSKGPDSLHDDQ) shows a compositional bias: basic and acidic residues. Over residues 509–523 (SAPPSSEPKSAPPSS) the composition is skewed to pro residues. Polar residues predominate over residues 617–631 (RLTGNPSNEAQSSRS). Residues 1205–1246 (MASLRDAAEIHKAEMSSLNDEVKRLNSREADLQKEFSDLQVA) are a coiled coil.

The protein localises to the chromosome. It is found in the nucleus. In terms of biological role, required for normal meiosis. The chain is Meiosis-specific protein ASY2 from Arabidopsis thaliana (Mouse-ear cress).